The primary structure comprises 314 residues: Malate dehydrogenase (314 aa).

NAD(+)-binding positions include 13–18 and Asp37; that span reads GGGQIG. The substrate site is built by Arg88 and Arg94. Residues Asn101 and 124–126 contribute to the NAD(+) site; that span reads VAN. Substrate contacts are provided by Asn126 and Arg157. Catalysis depends on His181, which acts as the Proton acceptor.

The protein belongs to the LDH/MDH superfamily. MDH type 3 family.

The catalysed reaction is (S)-malate + NAD(+) = oxaloacetate + NADH + H(+). Catalyzes the reversible oxidation of malate to oxaloacetate. This is Malate dehydrogenase from Myxococcus xanthus.